The sequence spans 364 residues: Uroporphyrinogen decarboxylase (364 aa).

Substrate is bound by residues Arg-28–Arg-32, Asp-78, Tyr-160, Thr-215, and His-333.

This sequence belongs to the uroporphyrinogen decarboxylase family. As to quaternary structure, homodimer.

The protein resides in the cytoplasm. It carries out the reaction uroporphyrinogen III + 4 H(+) = coproporphyrinogen III + 4 CO2. The protein operates within porphyrin-containing compound metabolism; protoporphyrin-IX biosynthesis; coproporphyrinogen-III from 5-aminolevulinate: step 4/4. In terms of biological role, catalyzes the decarboxylation of four acetate groups of uroporphyrinogen-III to yield coproporphyrinogen-III. The protein is Uroporphyrinogen decarboxylase of Burkholderia mallei (strain NCTC 10247).